Here is a 365-residue protein sequence, read N- to C-terminus: DNA replication and repair protein RecF (365 aa).

30–37 provides a ligand contact to ATP; sequence GLNAQGKT.

It belongs to the RecF family.

It localises to the cytoplasm. Its function is as follows. The RecF protein is involved in DNA metabolism; it is required for DNA replication and normal SOS inducibility. RecF binds preferentially to single-stranded, linear DNA. It also seems to bind ATP. In Chlamydia trachomatis serovar A (strain ATCC VR-571B / DSM 19440 / HAR-13), this protein is DNA replication and repair protein RecF.